The chain runs to 371 residues: tRNA N6-adenosine threonylcarbamoyltransferase (371 aa).

2 residues coordinate Fe cation: histidine 110 and histidine 114. Substrate contacts are provided by residues leucine 132–glycine 136, aspartate 165, glycine 178, aspartate 182, and asparagine 289. Aspartate 317 contacts Fe cation.

This sequence belongs to the KAE1 / TsaD family. Fe(2+) serves as cofactor.

The protein resides in the cytoplasm. The enzyme catalyses L-threonylcarbamoyladenylate + adenosine(37) in tRNA = N(6)-L-threonylcarbamoyladenosine(37) in tRNA + AMP + H(+). Required for the formation of a threonylcarbamoyl group on adenosine at position 37 (t(6)A37) in tRNAs that read codons beginning with adenine. Is involved in the transfer of the threonylcarbamoyl moiety of threonylcarbamoyl-AMP (TC-AMP) to the N6 group of A37, together with TsaE and TsaB. TsaD likely plays a direct catalytic role in this reaction. In Solidesulfovibrio magneticus (strain ATCC 700980 / DSM 13731 / RS-1) (Desulfovibrio magneticus), this protein is tRNA N6-adenosine threonylcarbamoyltransferase.